The chain runs to 104 residues: N(4)-acetylcytidine amidohydrolase (104 aa).

The ASCH domain maps to 6–96 (ITFYQRFEAD…TIYPNEHESW (91 aa)). K21 serves as the catalytic Proton acceptor. T24 acts as the Nucleophile in catalysis. E74 acts as the Proton donor in catalysis.

The protein belongs to the N(4)-acetylcytidine amidohydrolase family.

The catalysed reaction is N(4)-acetylcytidine + H2O = cytidine + acetate + H(+). It catalyses the reaction N(4)-acetyl-2'-deoxycytidine + H2O = 2'-deoxycytidine + acetate + H(+). It carries out the reaction N(4)-acetylcytosine + H2O = cytosine + acetate + H(+). Catalyzes the hydrolysis of N(4)-acetylcytidine (ac4C). The protein is N(4)-acetylcytidine amidohydrolase of Haemophilus influenzae (strain 86-028NP).